A 37-amino-acid chain; its full sequence is MKVRSSVKKICANCQIKRRHGVLRVICSNPKHKQRQG.

It belongs to the bacterial ribosomal protein bL36 family.

The protein localises to the plastid. It localises to the chloroplast. The polypeptide is Large ribosomal subunit protein bL36c (Cyanidioschyzon merolae (strain NIES-3377 / 10D) (Unicellular red alga)).